Here is a 367-residue protein sequence, read N- to C-terminus: Alanine racemase (367 aa).

Catalysis depends on K40, which acts as the Proton acceptor; specific for D-alanine. K40 carries the post-translational modification N6-(pyridoxal phosphate)lysine. A substrate-binding site is contributed by R136. The active-site Proton acceptor; specific for L-alanine is Y263. Position 310 (M310) interacts with substrate.

Belongs to the alanine racemase family. Pyridoxal 5'-phosphate is required as a cofactor.

The enzyme catalyses L-alanine = D-alanine. The protein operates within amino-acid biosynthesis; D-alanine biosynthesis; D-alanine from L-alanine: step 1/1. Its function is as follows. Catalyzes the interconversion of L-alanine and D-alanine. May also act on other amino acids. The protein is Alanine racemase (alr) of Lactococcus lactis subsp. cremoris (strain MG1363).